An 800-amino-acid chain; its full sequence is Structural protein ORF800 (800 aa).

Coiled-coil stretches lie at residues 98-130 (AENIVEYLKEEEKVKELLNKLNDALSQADYNLA), 447-475 (LLAEANNLIDQANAVITQVNNMMNNANNL), 514-567 (AINQ…ANNL), and 606-633 (AINQDSVNQVEENIQNIQNTITEFNLLA). Residues 759-800 (AESIAESESETTESENNETTESTANSEGEKQEGEHGARLIRV) form a disordered region. The segment covering 761–776 (SIAESESETTESENNE) has biased composition (acidic residues). Positions 785–800 (EGEKQEGEHGARLIRV) are enriched in basic and acidic residues.

It localises to the virion. The sequence is that of Structural protein ORF800 from Acidianus convivator (ATV).